The following is a 138-amino-acid chain: MPPKKAAASSAKKGQKTRRREKKNVPHGAAHIKSTFNNTIVSITDPQGNVIAWASSGHVGFKGSRKSTPFAAQLAAENAARKAQEHGVKKVDVFVKGPGSGRETAIRSLQAAGLEVGAIADVTPQPHNGCRPPKRRRV.

Residues 1–12 are compositionally biased toward low complexity; sequence MPPKKAAASSAK. The disordered stretch occupies residues 1–28; the sequence is MPPKKAAASSAKKGQKTRRREKKNVPHG. Over residues 13-22 the composition is skewed to basic residues; that stretch reads KGQKTRRREK.

This sequence belongs to the universal ribosomal protein uS11 family. In terms of assembly, part of the 30S ribosomal subunit. Interacts with proteins S7 and S18. Binds to IF-3.

Functionally, located on the platform of the 30S subunit, it bridges several disparate RNA helices of the 16S rRNA. Forms part of the Shine-Dalgarno cleft in the 70S ribosome. In Mycobacterium sp. (strain JLS), this protein is Small ribosomal subunit protein uS11.